Consider the following 233-residue polypeptide: Protein Thf1 (233 aa).

Residues 183 to 204 (DKFSKDLELYRSNLDKMTQALA) are a coiled coil. Positions 212–233 (ADRKKREQRQQQASTPVAPPNE) are disordered.

This sequence belongs to the THF1 family.

Its function is as follows. May be involved in photosynthetic membrane biogenesis. This chain is Protein Thf1, found in Nostoc sp. (strain PCC 7120 / SAG 25.82 / UTEX 2576).